A 90-amino-acid polypeptide reads, in one-letter code: MGAKAPRGPKVAQWAMETAVIGVVVVLFVVTVAITCVLCCFSCDSRAQDPQGGPGRSFTVATFRQEASLFTGPVRHAQPVPSAQDFWTFM.

Topologically, residues M1–T18 are lumenal. Residues A19–C39 traverse the membrane as a helical segment. Residues C40–M90 lie on the Cytoplasmic side of the membrane.

As to quaternary structure, interacts with components of the lysosomal V-ATPase complex. Interacts with ATP6V0A1. Interacts with ATP6V0A2. In terms of tissue distribution, highly expressed in lung, heart and skeletal muscle.

It localises to the late endosome membrane. Its subcellular location is the lysosome membrane. Negative regulator of amino acid sensing and mTORC1, a signaling complex promoting cell growth in response to growth factors, energy levels and amino acids. Negatively regulates mTORC1 activation by inhibiting recruitment of mTORC1 to lysosomes upon stimulation with amino acids: acts by promoting the formation of a tightly bound supercomplex composed of the lysosomal V-ATPase, Ragulator and Rag GTPases, preventing recruitment of mTORC1. Acts as a regulator of muscle regeneration following injury by regulating mTORC1 activation. The protein is Small regulatory polypeptide of amino acid response of Homo sapiens (Human).